The following is a 290-amino-acid chain: Acetyl-coenzyme A carboxylase carboxyl transferase subunit beta (290 aa).

Residues 28-290 (VMTKCPQCKK…GGGESGWWRN (263 aa)) form the CoA carboxyltransferase N-terminal domain. Zn(2+) contacts are provided by Cys32, Cys35, Cys51, and Cys54. Residues 32–54 (CPQCKKIMYTKELVKNLRVCLSC) form a C4-type zinc finger.

Belongs to the AccD/PCCB family. Acetyl-CoA carboxylase is a heterohexamer composed of biotin carboxyl carrier protein (AccB), biotin carboxylase (AccC) and two subunits each of ACCase subunit alpha (AccA) and ACCase subunit beta (AccD). It depends on Zn(2+) as a cofactor.

The protein resides in the cytoplasm. The enzyme catalyses N(6)-carboxybiotinyl-L-lysyl-[protein] + acetyl-CoA = N(6)-biotinyl-L-lysyl-[protein] + malonyl-CoA. It functions in the pathway lipid metabolism; malonyl-CoA biosynthesis; malonyl-CoA from acetyl-CoA: step 1/1. Functionally, component of the acetyl coenzyme A carboxylase (ACC) complex. Biotin carboxylase (BC) catalyzes the carboxylation of biotin on its carrier protein (BCCP) and then the CO(2) group is transferred by the transcarboxylase to acetyl-CoA to form malonyl-CoA. This is Acetyl-coenzyme A carboxylase carboxyl transferase subunit beta from Geobacillus thermodenitrificans (strain NG80-2).